Consider the following 159-residue polypeptide: Ribosomal RNA large subunit methyltransferase H (159 aa).

S-adenosyl-L-methionine-binding positions include L76, G108, and 127–132; that span reads FGKLTL.

The protein belongs to the RNA methyltransferase RlmH family. Homodimer.

The protein localises to the cytoplasm. It catalyses the reaction pseudouridine(1915) in 23S rRNA + S-adenosyl-L-methionine = N(3)-methylpseudouridine(1915) in 23S rRNA + S-adenosyl-L-homocysteine + H(+). In terms of biological role, specifically methylates the pseudouridine at position 1915 (m3Psi1915) in 23S rRNA. The chain is Ribosomal RNA large subunit methyltransferase H from Latilactobacillus sakei subsp. sakei (strain 23K) (Lactobacillus sakei subsp. sakei).